Here is a 131-residue protein sequence, read N- to C-terminus: D-ribose pyranase (131 aa).

Histidine 20 (proton donor) is an active-site residue. Substrate is bound by residues aspartate 28, histidine 98, and tyrosine 120–asparagine 122.

The protein belongs to the RbsD / FucU family. RbsD subfamily. As to quaternary structure, homodecamer.

It localises to the cytoplasm. The enzyme catalyses beta-D-ribopyranose = beta-D-ribofuranose. The protein operates within carbohydrate metabolism; D-ribose degradation; D-ribose 5-phosphate from beta-D-ribopyranose: step 1/2. Its function is as follows. Catalyzes the interconversion of beta-pyran and beta-furan forms of D-ribose. The sequence is that of D-ribose pyranase from Clostridium perfringens (strain ATCC 13124 / DSM 756 / JCM 1290 / NCIMB 6125 / NCTC 8237 / Type A).